The primary structure comprises 313 residues: PGR5-like protein 1B, chloroplastic (313 aa).

Residues 1–49 constitute a chloroplast transit peptide; sequence MAFTLTIPRFSAISRKPITCSSSRTQCPAPFTHGRSISLRRRLTLLPLK. Alanine 50 carries the post-translational modification N-acetylalanine. Residues 50-187 lie on the Stromal side of the membrane; the sequence is ASTDQSGQVG…KVYSDLAIDY (138 aa). An intrachain disulfide couples cysteine 71 to cysteine 172. Residues 188–208 form a helical membrane-spanning segment; the sequence is FKMFLLNVPATVVALGLFFFL. At 209 to 225 the chain is on the lumenal, thylakoid side; sequence DDITGFEITYLLELPEP. Residues 226 to 246 form a helical membrane-spanning segment; it reads FSFIFTWFAAVPAIVYLALSL. Over 247-313 the chain is Stromal; the sequence is TKLILKDFLI…LITLPEGGKA (67 aa).

It belongs to the PGR5 family. Homodimer and heterodimer with PGR5. Interacts with PGR5, FD2, psaD1, LFNR1 and LFNR2. Also interacts with petC and a Fe-containing cofactor (FCC). Post-translationally, disulfide bonds; Cys-289 and Cys-292 are probably involved in the formation of disulfide bridges with 'Cys-11' and 'Cys-105' of PGR5 while Cys-261 and Cys-264 are probably involved in the binding of a Fe-containing cofactor (FCC).

Its subcellular location is the plastid. It localises to the chloroplast thylakoid membrane. Its activity is regulated as follows. Inhibited by antimycin A. In terms of biological role, ferredoxin-plastoquinone reductase involved in cyclic electron flow (CEF) around photosystem I. The homodimer is probably not involved in CEF. The sequence is that of PGR5-like protein 1B, chloroplastic (PGRL1B) from Arabidopsis thaliana (Mouse-ear cress).